The primary structure comprises 273 residues: MNDKHLPDASAENPWLPLRQLTPARIALGRTGTSLPTRPQLDFQYAHAQARDAVHLPFDHAAISDGLRQRGRDSLLLHSAAADRHVYLQRPDLGRRLDEASVQRLREHAAGYDGQIDLAIVVADGLSALAVQRHTLPFLERLEEQALAEGWSLSPVVLVEQGRVAVADEIGELLRAKMSVILIGERPGLSSPDSLGLYFTWAPRVGLTDAYRNCISNVRLEGLSYGMAAHRLLYLMREACRRQLSGVNLKDEAEVQALEGEAPRTGNFLLARD.

Adenosylcob(III)alamin contacts are provided by V164, E185, and C214.

It belongs to the EutC family. As to quaternary structure, the basic unit is a heterodimer which dimerizes to form tetramers. The heterotetramers trimerize; 6 large subunits form a core ring with 6 small subunits projecting outwards. Adenosylcob(III)alamin is required as a cofactor.

It is found in the bacterial microcompartment. The enzyme catalyses ethanolamine = acetaldehyde + NH4(+). It participates in amine and polyamine degradation; ethanolamine degradation. Catalyzes the deamination of various vicinal amino-alcohols to oxo compounds. Allows this organism to utilize ethanolamine as the sole source of nitrogen and carbon in the presence of external vitamin B12. The chain is Ethanolamine ammonia-lyase small subunit from Pseudomonas aeruginosa (strain UCBPP-PA14).